Consider the following 104-residue polypeptide: Protein SMALL AUXIN UP-REGULATED RNA 12 (104 aa).

It belongs to the ARG7 family. In terms of tissue distribution, expressed in flowers and etiolated hypocotyls.

The protein localises to the cell membrane. Its function is as follows. Provide a mechanistic link between auxin and plasma membrane H(+)-ATPases (PM H(+)-ATPases, e.g. AHA1 and AHA2), and triggers PM H(+)-ATPases activity by promoting phosphorylation of their C-terminal autoinhibitory domain as a result of PP2C-D subfamily of type 2C phosphatases inhibition, thus leading to the acidification of the apoplast and the facilitation of solutes and water uptake to drive cell expansion. Triggers plant growth probably by promoting cell elongation. Regulates branch angles and bending. This chain is Protein SMALL AUXIN UP-REGULATED RNA 12, found in Arabidopsis thaliana (Mouse-ear cress).